The following is a 207-amino-acid chain: Small ribosomal subunit protein uS4 (207 aa).

The disordered stretch occupies residues 31–53; that stretch reads KAKFDSKPGQHGRTSGARTSDFG. One can recognise an S4 RNA-binding domain in the interval 97–160; that stretch reads SRLDNVVYRM…KKQNRIVEAL (64 aa).

It belongs to the universal ribosomal protein uS4 family. As to quaternary structure, part of the 30S ribosomal subunit. Contacts protein S5. The interaction surface between S4 and S5 is involved in control of translational fidelity.

In terms of biological role, one of the primary rRNA binding proteins, it binds directly to 16S rRNA where it nucleates assembly of the body of the 30S subunit. Functionally, with S5 and S12 plays an important role in translational accuracy. The chain is Small ribosomal subunit protein uS4 from Albidiferax ferrireducens (strain ATCC BAA-621 / DSM 15236 / T118) (Rhodoferax ferrireducens).